The following is a 143-amino-acid chain: Interleukin-3 (143 aa).

The N-terminal stretch at 1 to 23 (MSSFPILHLLLLLLGCQVPQAQG) is a signal peptide. N79 is a glycosylation site (N-linked (GlcNAc...) asparagine).

It belongs to the IL-3 family. As to quaternary structure, monomer.

The protein resides in the secreted. Its function is as follows. Granulocyte/macrophage colony-stimulating factors are cytokines that act in hematopoiesis by controlling the production, differentiation, and function of 2 related white cell populations of the blood, the granulocytes and the monocytes-macrophages. This CSF induces granulocytes, macrophages, mast cells, stem cells, erythroid cells, eosinophils and megakaryocytes. This is Interleukin-3 (IL3) from Canis lupus familiaris (Dog).